The following is a 570-amino-acid chain: Periplasmic trehalase (570 aa).

A signal peptide spans 1–34 (MIPPEIRRSVLLQKAIKLALAGTLLTFASFSATA). Substrate-binding positions include Arg-159, 166 to 167 (WD), Asn-203, 212 to 214 (RSQ), 284 to 286 (RPE), and Gly-317. Residues Asp-319 and Glu-503 each act as proton donor/acceptor in the active site. Substrate is bound at residue Glu-518. A disordered region spans residues 545–570 (PCDSVPSTRPASLSATPTKTPSAATQ). Over residues 554–570 (PASLSATPTKTPSAATQ) the composition is skewed to low complexity.

Belongs to the glycosyl hydrolase 37 family. As to quaternary structure, monomer.

The protein localises to the periplasm. The enzyme catalyses alpha,alpha-trehalose + H2O = alpha-D-glucose + beta-D-glucose. Functionally, provides the cells with the ability to utilize trehalose at high osmolarity by splitting it into glucose molecules that can subsequently be taken up by the phosphotransferase-mediated uptake system. This Salmonella agona (strain SL483) protein is Periplasmic trehalase.